Here is a 334-residue protein sequence, read N- to C-terminus: Phospho-N-acetylmuramoyl-pentapeptide-transferase (334 aa).

Transmembrane regions (helical) follow at residues 5–25 (VVWL…PVTI), 52–72 (PTMG…VLLV), 81–101 (GLVV…DDFI), 116–136 (KILG…FKLG), 148–168 (GISF…VLLG), 181–200 (GLAS…LALV), 230–250 (VFMG…GAVV), 256–276 (LLVV…IQVI), and 309–329 (FWLL…DFWL).

Belongs to the glycosyltransferase 4 family. MraY subfamily. Mg(2+) serves as cofactor.

The protein localises to the cell membrane. The catalysed reaction is UDP-N-acetyl-alpha-D-muramoyl-L-alanyl-gamma-D-glutamyl-meso-2,6-diaminopimeloyl-D-alanyl-D-alanine + di-trans,octa-cis-undecaprenyl phosphate = di-trans,octa-cis-undecaprenyl diphospho-N-acetyl-alpha-D-muramoyl-L-alanyl-D-glutamyl-meso-2,6-diaminopimeloyl-D-alanyl-D-alanine + UMP. Its pathway is cell wall biogenesis; peptidoglycan biosynthesis. Functionally, catalyzes the initial step of the lipid cycle reactions in the biosynthesis of the cell wall peptidoglycan: transfers peptidoglycan precursor phospho-MurNAc-pentapeptide from UDP-MurNAc-pentapeptide onto the lipid carrier undecaprenyl phosphate, yielding undecaprenyl-pyrophosphoryl-MurNAc-pentapeptide, known as lipid I. The polypeptide is Phospho-N-acetylmuramoyl-pentapeptide-transferase (Desulforamulus reducens (strain ATCC BAA-1160 / DSM 100696 / MI-1) (Desulfotomaculum reducens)).